The following is a 504-amino-acid chain: Deoxyguanosinetriphosphate triphosphohydrolase (504 aa).

Residues 66-273 (RLTHSMEVQQ…MEAADDISYC (208 aa)) form the HD domain.

It belongs to the dGTPase family. Type 1 subfamily. Homotetramer. Mg(2+) serves as cofactor.

The catalysed reaction is dGTP + H2O = 2'-deoxyguanosine + triphosphate + H(+). Functionally, dGTPase preferentially hydrolyzes dGTP over the other canonical NTPs. This chain is Deoxyguanosinetriphosphate triphosphohydrolase, found in Citrobacter koseri (strain ATCC BAA-895 / CDC 4225-83 / SGSC4696).